Here is a 185-residue protein sequence, read N- to C-terminus: Ribosome-recycling factor (185 aa).

This sequence belongs to the RRF family.

It localises to the cytoplasm. Responsible for the release of ribosomes from messenger RNA at the termination of protein biosynthesis. May increase the efficiency of translation by recycling ribosomes from one round of translation to another. The protein is Ribosome-recycling factor of Alteromonas mediterranea (strain DSM 17117 / CIP 110805 / LMG 28347 / Deep ecotype).